Here is a 254-residue protein sequence, read N- to C-terminus: MLQSLLLLPLFLTSAFATPHDPTAHQALEKRATFPIPSSKGSVTLRSTQYVKGTFDGGMKTYGRGVECTGQKEGGEKDAVFVVEEGGILKNVIIGADQIKGVYCKGSCTIQNVWWKDVCEDALSLKGSGSGTYKIIGGGAQNADDKVIQHNSGGTVMIQGFTVSNFGKLYRSCGNCSKQYKRSVQISGVKAYNGKTLVGINSNYGDTASIDACASSVKDICVEYEGTNNNGKEPKKKSSGPSKACEYNQPLKKC.

The N-terminal stretch at 1–17 (MLQSLLLLPLFLTSAFA) is a signal peptide. An N-linked (GlcNAc...) asparagine glycan is attached at N175. Positions 228–254 (NNNGKEPKKKSSGPSKACEYNQPLKKC) are disordered.

Belongs to the polysaccharide lyase 3 family. Ca(2+) is required as a cofactor.

It localises to the secreted. It catalyses the reaction Eliminative cleavage of (1-&gt;4)-alpha-D-galacturonan to give oligosaccharides with 4-deoxy-alpha-D-galact-4-enuronosyl groups at their non-reducing ends.. Its function is as follows. Pectinolytic enzyme consist of four classes of enzymes: pectin lyase, polygalacturonase, pectin methylesterase and rhamnogalacturonase. Among pectinolytic enzymes, pectin lyase is the most important in depolymerization of pectin, since it cleaves internal glycosidic bonds of highly methylated pectins. Favors pectate, the anion, over pectin, the methyl ester. The polypeptide is Probable pectate lyase E (plyE) (Aspergillus clavatus (strain ATCC 1007 / CBS 513.65 / DSM 816 / NCTC 3887 / NRRL 1 / QM 1276 / 107)).